The following is a 341-amino-acid chain: C2 calcium-dependent domain-containing protein 4D (341 aa).

Residues 56–71 (RLRDPRGAEGRVDRNP) show a composition bias toward basic and acidic residues. 2 disordered regions span residues 56–75 (RLRD…GGRN) and 134–176 (CRAP…PYAP). Over residues 139–149 (SDTASSPDSSP) the composition is skewed to low complexity. The 127-residue stretch at 205–331 (RGGQLRLSTE…PPLAGGLGPG (127 aa)) folds into the C2 domain.

This Mus musculus (Mouse) protein is C2 calcium-dependent domain-containing protein 4D (C2cd4d).